A 132-amino-acid chain; its full sequence is Small ribosomal subunit protein uS8 (132 aa).

This sequence belongs to the universal ribosomal protein uS8 family. As to quaternary structure, part of the 30S ribosomal subunit. Contacts proteins S5 and S12.

Functionally, one of the primary rRNA binding proteins, it binds directly to 16S rRNA central domain where it helps coordinate assembly of the platform of the 30S subunit. The sequence is that of Small ribosomal subunit protein uS8 from Anaplasma marginale (strain Florida).